Here is a 107-residue protein sequence, read N- to C-terminus: Small ribosomal subunit protein bS16 (107 aa).

The disordered stretch occupies residues arginine 85–lysine 107.

It belongs to the bacterial ribosomal protein bS16 family.

The polypeptide is Small ribosomal subunit protein bS16 (Rhodopseudomonas palustris (strain BisB5)).